The primary structure comprises 188 residues: Elongation factor P (188 aa).

Belongs to the elongation factor P family.

The protein resides in the cytoplasm. It functions in the pathway protein biosynthesis; polypeptide chain elongation. Functionally, involved in peptide bond synthesis. Stimulates efficient translation and peptide-bond synthesis on native or reconstituted 70S ribosomes in vitro. Probably functions indirectly by altering the affinity of the ribosome for aminoacyl-tRNA, thus increasing their reactivity as acceptors for peptidyl transferase. The protein is Elongation factor P of Saccharopolyspora erythraea (strain ATCC 11635 / DSM 40517 / JCM 4748 / NBRC 13426 / NCIMB 8594 / NRRL 2338).